Reading from the N-terminus, the 629-residue chain is Nicotinic receptor-associated protein 1 (629 aa).

C2 domains lie at 1–144 (MNQP…KAHL) and 162–299 (RTGS…ELLL). Ca(2+) is bound by residues Asp33, Asp39, Asp108, Asp110, Asp122, Asp192, Asp198, Asp254, Asp256, and Asp274. The VWFA domain occupies 342-561 (EFAVAVDFTA…LDPDVVQENL (220 aa)). Disordered regions lie at residues 581 to 600 (GFQPRPVENPWTRNSPPPDY) and 607 to 629 (IGRRAQAPSPGFQMPVASAPPMY).

Belongs to the copine family. As to quaternary structure, interacts with nicotinic acetylcholine receptor. The cofactor is Ca(2+).

It localises to the cell membrane. Its function is as follows. Exhibits calcium-dependent phospholipid binding properties. May function in membrane trafficking. Regulates synaptic levels of nicotinic acetylcholine receptor subunit lev-1 and unc-38 in the nerve cord. Involved in nicotinic acetylcholine receptor (nAChR)-mediated sensitivity to nicotine and levamisole. Affects directional sperm motility. The sequence is that of Nicotinic receptor-associated protein 1 from Caenorhabditis briggsae.